We begin with the raw amino-acid sequence, 302 residues long: Acetylglutamate kinase (302 aa).

Residues 68–69 (GG), R90, and N194 contribute to the substrate site.

This sequence belongs to the acetylglutamate kinase family. ArgB subfamily.

It localises to the cytoplasm. It catalyses the reaction N-acetyl-L-glutamate + ATP = N-acetyl-L-glutamyl 5-phosphate + ADP. The protein operates within amino-acid biosynthesis; L-arginine biosynthesis; N(2)-acetyl-L-ornithine from L-glutamate: step 2/4. Catalyzes the ATP-dependent phosphorylation of N-acetyl-L-glutamate. The sequence is that of Acetylglutamate kinase from Acinetobacter baumannii (strain AB307-0294).